The following is a 169-amino-acid chain: Crossover junction endodeoxyribonuclease RuvC (169 aa).

Active-site residues include Asp12, Glu72, and Asp144. Residues Asp12, Glu72, and Asp144 each coordinate Mg(2+).

It belongs to the RuvC family. As to quaternary structure, homodimer which binds Holliday junction (HJ) DNA. The HJ becomes 2-fold symmetrical on binding to RuvC with unstacked arms; it has a different conformation from HJ DNA in complex with RuvA. In the full resolvosome a probable DNA-RuvA(4)-RuvB(12)-RuvC(2) complex forms which resolves the HJ. Requires Mg(2+) as cofactor.

It localises to the cytoplasm. It carries out the reaction Endonucleolytic cleavage at a junction such as a reciprocal single-stranded crossover between two homologous DNA duplexes (Holliday junction).. The RuvA-RuvB-RuvC complex processes Holliday junction (HJ) DNA during genetic recombination and DNA repair. Endonuclease that resolves HJ intermediates. Cleaves cruciform DNA by making single-stranded nicks across the HJ at symmetrical positions within the homologous arms, yielding a 5'-phosphate and a 3'-hydroxyl group; requires a central core of homology in the junction. The consensus cleavage sequence is 5'-(A/T)TT(C/G)-3'. Cleavage occurs on the 3'-side of the TT dinucleotide at the point of strand exchange. HJ branch migration catalyzed by RuvA-RuvB allows RuvC to scan DNA until it finds its consensus sequence, where it cleaves and resolves the cruciform DNA. The protein is Crossover junction endodeoxyribonuclease RuvC of Xanthobacter autotrophicus (strain ATCC BAA-1158 / Py2).